The primary structure comprises 105 residues: Guanyl-specific ribonuclease U1 (105 aa).

Position 1 is a pyrrolidone carboxylic acid (glutamine 1). 2 cysteine pairs are disulfide-bonded: cysteine 8/cysteine 103 and cysteine 51/cysteine 87. Histidine 37 is an active-site residue. Residue glutamate 57 is the Proton acceptor of the active site. Histidine 92 serves as the catalytic Proton donor.

It belongs to the ribonuclease N1/T1 family.

The enzyme catalyses [RNA] containing guanosine + H2O = an [RNA fragment]-3'-guanosine-3'-phosphate + a 5'-hydroxy-ribonucleotide-3'-[RNA fragment].. In Ustilago sphaerogena (Smut fungus), this protein is Guanyl-specific ribonuclease U1.